Reading from the N-terminus, the 138-residue chain is Small ribosomal subunit protein uS11c (138 aa).

Positions 1-23 (MAKPILRIGSRKNTRSGSRKNVR) are disordered. The segment covering 9–23 (GSRKNTRSGSRKNVR) has biased composition (basic residues).

The protein belongs to the universal ribosomal protein uS11 family. Part of the 30S ribosomal subunit.

The protein localises to the plastid. It localises to the chloroplast. In Barbarea verna (Land cress), this protein is Small ribosomal subunit protein uS11c.